The sequence spans 676 residues: MACSTLSKSPKDKIDPRDLLIPLILFLSLKGARSAAPGSSPHQVYNITWEVTNGDRETVWAISGNHPLWTWWPVLTPDLCMLALSGPPHWGLEYQAPYSSPPGPPCCSGSSGNVAGCARDCNEPLTSLTPRCNTAWNRLKLDQVTHKSSEGFYVCPGSHRPREAKSCGGPDSFYCASWGCETTGRVYWKPSSSWDYITVDNNLTSNQAVQVCKDNKWCNPLAIRFTNAGKQVTSWTTGHYWGLRLYVSGQDPGLTFGIRLSYQNLGPRIPIGPNPVLADQLSFPLPNPLPKPAKSPPASSSTPTLISPSPTPTQPPPAGTGDRLLNLVQGAYQALNLTNPDKTQECWLCLVSGPPYYEGVAVLGTYSNHTSAPANCSVASQHKLTLSEVTGRGLCIGTVPKTHQALCNTTLKAGKGSYYLVAPTGTMWACNTGLTPCLSATVLNRTTDYCVLVELWPRVTYHPPSYVYSQFEKSHRHKREPVSLTLALLLGGLTMGGIAAGVGTGTTALVATQQFQQLHAAVQDDLKEVEKSITNLEKSLTSLSEVVLQNRRGLDLLFLKEGGLCAALKEECCFYADHTGLVRDSMAKLRERLSQRQKLFESSQGWFEGWFNRSPWFTTLISTIMGPLIILLLILLFGPCILNRLVQFVKDRISVVQALVLTQQYHQLKPLEYEPQ.

A signal peptide spans methionine 1–serine 34. Residues alanine 35 to proline 270 are receptor-binding domain (RBD). Residues alanine 35–leucine 620 lie on the Extracellular side of the membrane. Residue asparagine 46 is glycosylated (N-linked (GlcNAc...) asparagine; by host). 5 disulfides stabilise this stretch: cysteine 80-cysteine 132, cysteine 106-cysteine 121, cysteine 107-cysteine 117, cysteine 155-cysteine 175, and cysteine 167-cysteine 180. Residue histidine 89 coordinates Zn(2+). Aspartate 120 lines the Zn(2+) pocket. N-linked (GlcNAc...) asparagine; by host glycosylation occurs at asparagine 202. A disulfide bond links cysteine 212 and cysteine 218. Positions asparagine 287–glycine 321 are disordered. Residues proline 296–proline 308 are compositionally biased toward low complexity. Pro residues predominate over residues serine 309–alanine 318. An N-linked (GlcNAc...) asparagine; by host glycan is attached at asparagine 336. 6 cysteine pairs are disulfide-bonded: cysteine 346/cysteine 349, cysteine 346/cysteine 573, cysteine 376/cysteine 430, cysteine 395/cysteine 407, cysteine 437/cysteine 450, and cysteine 565/cysteine 572. A CXXC motif is present at residues cysteine 346 to cysteine 349. Asparagine 368 and asparagine 375 each carry an N-linked (GlcNAc...) asparagine; by host glycan. N-linked (GlcNAc...) asparagine; by host glycosylation is found at asparagine 408 and asparagine 444. The fusion peptide stretch occupies residues valine 482 to valine 502. Residues glutamine 513 to valine 547 are a coiled coil. The segment at leucine 548–leucine 564 is immunosuppression. The CX6CC motif lies at cysteine 565–cysteine 573. A helical membrane pass occupies residues isoleucine 621–isoleucine 641. Cysteine 640 carries the S-palmitoyl cysteine; by host lipid modification. Topologically, residues leucine 642 to glutamine 676 are cytoplasmic. The YXXL motif; contains endocytosis signal signature appears at tyrosine 665–leucine 668.

As to quaternary structure, the mature envelope protein (Env) consists of a trimer of SU-TM heterodimers attached by a labile interchain disulfide bond. In terms of processing, specific enzymatic cleavages in vivo yield mature proteins. Envelope glycoproteins are synthesized as an inactive precursor that is N-glycosylated and processed likely by host cell furin or by a furin-like protease in the Golgi to yield the mature SU and TM proteins. The cleavage site between SU and TM requires the minimal sequence [KR]-X-[KR]-R. The R-peptide is released from the C-terminus of the cytoplasmic tail of the TM protein upon particle formation as a result of proteolytic cleavage by the viral protease. Cleavage of this peptide is required for TM to become fusogenic. The CXXC motif is highly conserved across a broad range of retroviral envelope proteins. It is thought to participate in the formation of a labile disulfide bond possibly with the CX6CC motif present in the transmembrane protein. Isomerization of the intersubunit disulfide bond to an SU intrachain disulfide bond is thought to occur upon receptor recognition in order to allow membrane fusion. Post-translationally, the transmembrane protein is palmitoylated. In terms of processing, the R-peptide is palmitoylated.

Its subcellular location is the virion membrane. The protein resides in the host cell membrane. Its function is as follows. The surface protein (SU) attaches the virus to the host cell by binding to its receptor. This interaction triggers the refolding of the transmembrane protein (TM) and is thought to activate its fusogenic potential by unmasking its fusion peptide. Fusion occurs at the host cell plasma membrane. Functionally, the transmembrane protein (TM) acts as a class I viral fusion protein. Under the current model, the protein has at least 3 conformational states: pre-fusion native state, pre-hairpin intermediate state, and post-fusion hairpin state. During viral and target cell membrane fusion, the coiled coil regions (heptad repeats) assume a trimer-of-hairpins structure, positioning the fusion peptide in close proximity to the C-terminal region of the ectodomain. The formation of this structure appears to drive apposition and subsequent fusion of viral and target cell membranes. Membranes fusion leads to delivery of the nucleocapsid into the cytoplasm. This Friend murine leukemia virus (isolate FB29) (FrMLV) protein is Envelope glycoprotein (env).